Consider the following 421-residue polypeptide: Methionine aminopeptidase 2 (421 aa).

The segment at 1 to 53 (MTDAEIENSPASDLKELNLENEGVEQQDQAKADESDPVESKKKKNKKKKKKKS) is disordered. The span at 28 to 40 (DQAKADESDPVES) shows a compositional bias: basic and acidic residues. Ser-35 is modified (phosphoserine). Positions 41 to 53 (KKKKNKKKKKKKS) are enriched in basic residues. His-174 is a substrate binding site. Positions 194, 205, and 274 each coordinate a divalent metal cation. His-282 provides a ligand contact to substrate. A divalent metal cation contacts are provided by Glu-307 and Glu-402.

Belongs to the peptidase M24A family. Methionine aminopeptidase eukaryotic type 2 subfamily. Requires Co(2+) as cofactor. It depends on Zn(2+) as a cofactor. Mn(2+) serves as cofactor. Fe(2+) is required as a cofactor.

It localises to the cytoplasm. The catalysed reaction is Release of N-terminal amino acids, preferentially methionine, from peptides and arylamides.. Cotranslationally removes the N-terminal methionine from nascent proteins. The N-terminal methionine is often cleaved when the second residue in the primary sequence is small and uncharged (Met-Ala-, Cys, Gly, Pro, Ser, Thr, or Val). In Saccharomyces cerevisiae (strain RM11-1a) (Baker's yeast), this protein is Methionine aminopeptidase 2.